Consider the following 137-residue polypeptide: Actin-depolymerizing factor 7 (137 aa).

S6 is modified (phosphoserine). The 131-residue stretch at 7–137 (GMAVEDECKL…SFDIIKSRAL (131 aa)) folds into the ADF-H domain.

It belongs to the actin-binding proteins ADF family. In terms of tissue distribution, specifically expressed in pollen.

Its subcellular location is the cytoplasm. It localises to the cytoskeleton. Actin-depolymerizing protein. Severs actin filaments (F-actin) and binds to actin monomers. Binds monomeric actin (G-actin) with a marked preference for the ADP-loaded form and inhibits the rate of nucleotide exchange on G-actin. Required for pollen tube growth. Promotes turnover of longitudinal actin cables by severing actin filaments in pollen tubes. This is Actin-depolymerizing factor 7 (ADF7) from Arabidopsis thaliana (Mouse-ear cress).